We begin with the raw amino-acid sequence, 305 residues long: LysM and putative peptidoglycan-binding domain-containing protein 3 (305 aa).

Residues 1-221 (MTGRNQHNGF…PYYGADWGMR (221 aa)) are Extracellular-facing. N-linked (GlcNAc...) asparagine glycosylation is present at N29. The interval 31 to 60 (SETEYSEEDGEAFELRSRGRERHHRSTSRD) is disordered. Residues 68 to 112 (LIREIKEGDTLISISLQYFCTVADIKRANNLLTEQDFFALRSLRI) form the LysM domain. Polar residues predominate over residues 121–144 (TETHNTAPHKSSSPSGTCRITETP). Positions 121-156 (TETHNTAPHKSSSPSGTCRITETPVSGASLDSTSSS) are disordered. Residues 146 to 156 (SGASLDSTSSS) are compositionally biased toward low complexity. A helical membrane pass occupies residues 222–242 (WWTAVAIMLVVGIVTPVFYLL). Residues 243-305 (YYEVLMKADV…QHHVKHQEET (63 aa)) are Cytoplasmic-facing.

Its subcellular location is the cell membrane. It localises to the golgi apparatus. In terms of biological role, essential for Golgi structural integrity. The polypeptide is LysM and putative peptidoglycan-binding domain-containing protein 3 (lysmd3) (Danio rerio (Zebrafish)).